Here is a 232-residue protein sequence, read N- to C-terminus: Transcriptional regulatory protein CpxR (232 aa).

Residues 3–115 (KILLVDDDRE…ELVARIRAIL (113 aa)) enclose the Response regulatory domain. Asp-51 is modified (4-aspartylphosphate). The segment at residues 131–230 (SPTLEVDALS…LRGRGYLMVS (100 aa)) is a DNA-binding region (ompR/PhoB-type).

In terms of assembly, interacts with cognate sensor kinase CpxA. In terms of processing, phosphorylated by CpxA.

It localises to the cytoplasm. The two-component system is activated by envelope stress such as overexpression of some (misfolded) periplasmic proteins. Response regulator member of the two-component regulatory system CpxA/CpxR which responds to envelope stress response by activating or, in some cases, repressing expression of downstream genes. Binds to the promoter regions of various genes in vitro, including ompC, cpxP, ryhB and mrkA and, when CpxR is phosphorylated, pecO. Represses expression of the major pilin of type 3 fimbriae MrkA as well as that of type 1 fimbriae FimA. Repression of expression of MrkA appears to be indirect, mediated by activation of the iron homeostasis regulator RyhB. In Klebsiella pneumoniae subsp. pneumoniae (strain HS11286), this protein is Transcriptional regulatory protein CpxR.